The following is a 344-amino-acid chain: Anthranilate phosphoribosyltransferase (344 aa).

5-phospho-alpha-D-ribose 1-diphosphate-binding positions include glycine 86, 89–90 (GD), threonine 94, 96–99 (NIST), 114–122 (KHGNKSASG), and serine 126. Residue glycine 86 coordinates anthranilate. Serine 98 lines the Mg(2+) pocket. Asparagine 117 contacts anthranilate. Arginine 172 is an anthranilate binding site. Mg(2+)-binding residues include aspartate 231 and glutamate 232.

It belongs to the anthranilate phosphoribosyltransferase family. As to quaternary structure, homodimer. The cofactor is Mg(2+).

It carries out the reaction N-(5-phospho-beta-D-ribosyl)anthranilate + diphosphate = 5-phospho-alpha-D-ribose 1-diphosphate + anthranilate. It functions in the pathway amino-acid biosynthesis; L-tryptophan biosynthesis; L-tryptophan from chorismate: step 2/5. Its function is as follows. Catalyzes the transfer of the phosphoribosyl group of 5-phosphorylribose-1-pyrophosphate (PRPP) to anthranilate to yield N-(5'-phosphoribosyl)-anthranilate (PRA). This is Anthranilate phosphoribosyltransferase from Prochlorococcus marinus (strain AS9601).